Here is a 235-residue protein sequence, read N- to C-terminus: MSNQLIYTGKAKDIYSTEDENVIKSVYKDQATMLNGARKETIKGKGVLNNQISSLIFEKLNAAGVATHFIKRISDTEQLNKKVTIIPLEVVLRNVTAGSFSKRFGVEEGLDLKTPIVEFYYKNDDLDDPFINDEHVKFLDIANDEQIAYIKEETRRINELLKDWFEQIGLRLIDFKLEFGFDKDGKIILADEFSPDNCRLWDAEGHHMDKDVFRRDLGSLTDVYEVVLEKLQGLK.

Belongs to the SAICAR synthetase family.

The enzyme catalyses 5-amino-1-(5-phospho-D-ribosyl)imidazole-4-carboxylate + L-aspartate + ATP = (2S)-2-[5-amino-1-(5-phospho-beta-D-ribosyl)imidazole-4-carboxamido]succinate + ADP + phosphate + 2 H(+). It functions in the pathway purine metabolism; IMP biosynthesis via de novo pathway; 5-amino-1-(5-phospho-D-ribosyl)imidazole-4-carboxamide from 5-amino-1-(5-phospho-D-ribosyl)imidazole-4-carboxylate: step 1/2. The protein is Phosphoribosylaminoimidazole-succinocarboxamide synthase of Streptococcus thermophilus (strain ATCC BAA-250 / LMG 18311).